The primary structure comprises 516 residues: uncharacterized protein (516 aa).

PFTB repeat units follow at residues 45 to 86 (RQDA…QRAD) and 401 to 443 (DERA…DGSE).

This is an uncharacterized protein from Sinorhizobium fredii (strain NBRC 101917 / NGR234).